We begin with the raw amino-acid sequence, 148 residues long: Globin-3 (148 aa).

A Globin domain is found at 2-148 (TLTKHEQDIL…HVFPMMAAEI (147 aa)). A heme-binding site is contributed by histidine 99.

Belongs to the globin family. Monomer.

Its function is as follows. Oxygen binding protein. This is Globin-3 from Paramphistomum epiclitum.